A 575-amino-acid chain; its full sequence is GBF-interacting protein 1-like (575 aa).

Disordered regions lie at residues 66 to 171 and 229 to 296; these read SKRE…SKSD and SSSN…VVHS. Polar residues-rich tracts occupy residues 90–102, 115–138, and 161–171; these read FASSNSYQGSGRN, TRGSRTAQPATNKASNITVPNETK, and ISASRCSSKSD. Residues 268-281 show a composition bias toward basic and acidic residues; that stretch reads AREETSTVSEDKDY.

This sequence belongs to the GIP1 family. Expressed in roots, leaves, stems and flowers.

The protein localises to the nucleus. May act as a transcriptional coactivator of LOB domain-containing proteins. This is GBF-interacting protein 1-like from Arabidopsis thaliana (Mouse-ear cress).